A 166-amino-acid polypeptide reads, in one-letter code: MKYTSYFLALLLCVLLGFSGSYGQGQFFREIENLKEYFNASNPDVAKGGPLFSEILKNWKDESDKKIIQSQIVSFYFKLFENLKDNQIIQRSMDIIKQDMFQKFLNGSSEKLEDFKKLIQIPVDDLQTQRKAINELIKVMNDLSPKSNLRKRKRSQNLFRGRRAST.

Positions 1–23 are cleaved as a signal peptide; that stretch reads MKYTSYFLALLLCVLLGFSGSYG. At Gln-24 the chain carries Pyrrolidone carboxylic acid. Asn-39 and Asn-106 each carry an N-linked (GlcNAc...) asparagine glycan.

Belongs to the type II (or gamma) interferon family. In terms of assembly, homodimer. Interacts with IFNGR1 (via extracellular domain); this interaction promotes IFNGR1 dimerization. As to expression, released primarily from activated T lymphocytes.

The protein localises to the secreted. In terms of biological role, type II interferon produced by immune cells such as T-cells and NK cells that plays crucial roles in antimicrobial, antiviral, and antitumor responses by activating effector immune cells and enhancing antigen presentation. Primarily signals through the JAK-STAT pathway after interaction with its receptor IFNGR1 to affect gene regulation. Upon IFNG binding, IFNGR1 intracellular domain opens out to allow association of downstream signaling components JAK2, JAK1 and STAT1, leading to STAT1 activation, nuclear translocation and transcription of IFNG-regulated genes. Many of the induced genes are transcription factors such as IRF1 that are able to further drive regulation of a next wave of transcription. Plays a role in class I antigen presentation pathway by inducing a replacement of catalytic proteasome subunits with immunoproteasome subunits. In turn, increases the quantity, quality, and repertoire of peptides for class I MHC loading. Increases the efficiency of peptide generation also by inducing the expression of activator PA28 that associates with the proteasome and alters its proteolytic cleavage preference. Up-regulates as well MHC II complexes on the cell surface by promoting expression of several key molecules such as cathepsins B/CTSB, H/CTSH, and L/CTSL. Participates in the regulation of hematopoietic stem cells during development and under homeostatic conditions by affecting their development, quiescence, and differentiation. In Bubalus bubalis (Domestic water buffalo), this protein is Interferon gamma (IFNG).